The chain runs to 637 residues: Sodium-dependent phosphate transport protein 2A (637 aa).

Topologically, residues 1-103 (MMSYSERLGG…LAQVGTKLLK (103 aa)) are cytoplasmic. A phosphoserine mark is found at S14 and S34. Residues 104–125 (VPLMLAFLYLFVCSLDVLSSAF) traverse the membrane as a helical segment. The Extracellular portion of the chain corresponds to 126–145 (QLAGGKVAGDIFKDNAILSN). Residues 146–163 (PVAGLVVGILVTVLVQSS) form a helical membrane-spanning segment. The Cytoplasmic segment spans residues 164-165 (ST). A helical transmembrane segment spans residues 166–185 (STSIIVSMVSSGLLEVSSAI). Topologically, residues 186–345 (PIIMGSNIGT…HIFVDTGLPD (160 aa)) are extracellular. 2 cysteine pairs are disulfide-bonded: C225-C520 and C306-C334. 2 N-linked (GlcNAc...) asparagine glycosylation sites follow: N298 and N328. The chain crosses the membrane as a helical span at residues 346 to 368 (LAVGLILLAGSLVVLCTCLILLV). The Cytoplasmic segment spans residues 369–410 (KMLNSLLKGQVMSSRRSSTQTDFPAPFTWVTGYFAMVVGASM). The chain crosses the membrane as a helical span at residues 411-434 (TFVVQSSSVFTSAITPLIGLGVIS). Residues 435 to 464 (IERAYPLTLGSNIGTTTTAILAALASPREK) are Extracellular-facing. Residues 465-485 (LSSSFQIALCHFFFNISGILL) traverse the membrane as a helical segment. The Cytoplasmic portion of the chain corresponds to 486–511 (WYPLPCTRLPIRMAKALGKRTAKYRW). Residue T506 is modified to Phosphothreonine; by PKC. Residues 512-532 (FAVLYLLVCFLLLPSLVFGIS) form a helical membrane-spanning segment. The Extracellular portion of the chain corresponds to 533–537 (MAGWQ). Residues 538–559 (AMVGVGTPFGALLAFVVLVNVL) form a helical membrane-spanning segment. The Cytoplasmic portion of the chain corresponds to 560–637 (QSRSPGHLPK…LPAHHNATRL (78 aa)). S605 bears the Phosphoserine mark. T621 is modified (phosphothreonine). S623 is modified (phosphoserine).

Belongs to the SLC34A transporter family. In terms of assembly, interacts via its C-terminal region with NHERF4. Interacts with NHERF1. Interacts with TMEM174; regulates SLC34A1 internalization by PTH and FGF23. Kidney.

The protein resides in the apical cell membrane. It localises to the cell membrane. It catalyses the reaction 3 Na(+)(out) + phosphate(out) = 3 Na(+)(in) + phosphate(in). Involved in actively transporting phosphate into cells via Na(+) cotransport in the renal brush border membrane. The cotransport has a Na(+):Pi stoichiometry of 3:1 and is electrogenic. The polypeptide is Sodium-dependent phosphate transport protein 2A (Mus musculus (Mouse)).